Reading from the N-terminus, the 237-residue chain is UPF0502 protein RB6530 (237 aa).

Over residues 187 to 202 (ASSAAPSQAESGSTSP) the composition is skewed to polar residues. The segment at 187–211 (ASSAAPSQAESGSTSPAKAANDDRI) is disordered.

Belongs to the UPF0502 family.

In Rhodopirellula baltica (strain DSM 10527 / NCIMB 13988 / SH1), this protein is UPF0502 protein RB6530.